Reading from the N-terminus, the 130-residue chain is Small ribosomal subunit protein uS9 (130 aa).

Belongs to the universal ribosomal protein uS9 family.

This chain is Small ribosomal subunit protein uS9, found in Carboxydothermus hydrogenoformans (strain ATCC BAA-161 / DSM 6008 / Z-2901).